We begin with the raw amino-acid sequence, 352 residues long: C-C chemokine receptor type 5 (352 aa).

Residues 1–30 are Extracellular-facing; that stretch reads MDYQVSSPTYDIDYYTSEPCQKIKVKQIAA. Tyr-3 bears the Sulfotyrosine mark. 2 O-linked (GalNAc...) serine glycosylation sites follow: Ser-6 and Ser-7. Tyr-10, Tyr-14, and Tyr-15 each carry sulfotyrosine. 2 cysteine pairs are disulfide-bonded: Cys-20/Cys-269 and Cys-101/Cys-178. Residues 31–58 form a helical membrane-spanning segment; the sequence is RLLPPLYSLVFIFGFVGNILVVLILINC. The Cytoplasmic portion of the chain corresponds to 59 to 68; sequence KRLKSMTDIY. Residues 69 to 89 traverse the membrane as a helical segment; the sequence is LLNLAISDLLFLLTVPFWAHY. The Extracellular portion of the chain corresponds to 90 to 102; that stretch reads AAAQWDFGNTMCQ. The chain crosses the membrane as a helical span at residues 103-124; sequence LLTGLYFIGFFSGIFFIILLTI. At 125–141 the chain is on the cytoplasmic side; that stretch reads DRYLAIVHAVFALKART. A helical transmembrane segment spans residues 142–166; sequence VTFGVVTSVITWVVAVFASLPRIIF. Residues 167–198 lie on the Extracellular side of the membrane; the sequence is TRSQREGLHYTCSSHFPYSQYQFWKNFQTLKI. A helical membrane pass occupies residues 199–218; the sequence is VILGLVLPLLVMVICYSGIL. Over 219–235 the chain is Cytoplasmic; it reads KTLLRCRNDKKRHRAVR. Residues 236-260 form a helical membrane-spanning segment; sequence LIFTIMIVYFLFWAPYNIVLLLNTF. Residues 261-277 are Extracellular-facing; it reads QEFFGLNNCSSSNRLDQ. The chain crosses the membrane as a helical span at residues 278–301; that stretch reads AMQVTETLGMTHCCINPIIYAFVG. Residues 302–352 lie on the Cytoplasmic side of the membrane; it reads EKFRNYLLVFFQKHIAKRFCKCCSIFQQDAPERASSVYTRSTGEQETSVGL. S-palmitoyl cysteine attachment occurs at residues Cys-321, Cys-323, and Cys-324. Phosphoserine; by BARK1 occurs at positions 336, 337, 342, and 349.

It belongs to the G-protein coupled receptor 1 family. As to quaternary structure, interacts with PRAF2. Efficient ligand binding to CCL3/MIP-1alpha and CCL4/MIP-1beta requires sulfation, O-glycosylation and sialic acid modifications. Glycosylation on Ser-6 is required for efficient binding of CCL4. Interacts with GRK2. Interacts with ARRB1 and ARRB2. Interacts with CNIH4. Interacts with S100A4; this interaction stimulates T-lymphocyte chemotaxis. Sulfated on at least 2 of the N-terminal tyrosines. Sulfation is required for efficient binding of the chemokines, CCL3 and CCL4. Post-translationally, palmitoylation in the C-terminal is important for cell surface expression. In terms of processing, phosphorylation on serine residues in the C-terminal is stimulated by binding CC chemokines especially by APO-RANTES. O-glycosylated, but not N-glycosylated. Ser-6 appears to be the major site even if Ser-7 may be also O-glycosylated. Also sialylated glycans present which contribute to chemokine binding. Thr-16 and Ser-17 may also be glycosylated and, if so, with small moieties such as a T-antigen.

Its subcellular location is the cell membrane. Its function is as follows. Receptor for a number of inflammatory CC-chemokines including CCL3/MIP-1-alpha, CCL4/MIP-1-beta and RANTES and subsequently transduces a signal by increasing the intracellular calcium ion level. May play a role in the control of granulocytic lineage proliferation or differentiation. Participates in T-lymphocyte migration to the infection site by acting as a chemotactic receptor. The polypeptide is C-C chemokine receptor type 5 (CCR5) (Chlorocebus sabaeus (Green monkey)).